The following is a 142-amino-acid chain: VapC ribonuclease R02377 (142 aa).

The region spanning 3–140 (FVDGSVIVAI…YKGNDFSQTD (138 aa)) is the PINc domain. Mg(2+) is bound by residues Asp5 and Asp115.

The protein belongs to the PINc/VapC protein family. Mg(2+) serves as cofactor.

Functionally, toxic component of a type II toxin-antitoxin (TA) system. An RNase. The chain is VapC ribonuclease R02377 from Rhizobium meliloti (strain 1021) (Ensifer meliloti).